A 926-amino-acid chain; its full sequence is Coatomer subunit beta'-2 (926 aa).

9 WD repeats span residues 13–52, 55–94, 97–136, 140–180, 183–224, 227–266, 269–309, 351–390, and 461–501; these read QRSE…MAKS, VTEL…KVKV, AHSD…ACTQ, GHSH…PNFT, AHQK…CVQT, GHTH…LENT, YGLE…ASMD, TCDL…RSFG, and RIDV…SHFD. The segment at 847–926 is disordered; sequence EEESLENGDM…GTNNEGNPSA (80 aa). Residues 868–887 are compositionally biased toward basic and acidic residues; it reads NEQRNEDDVAEHVEEHHEEK. Residues 888–900 show a composition bias toward acidic residues; it reads EAEEEEGIVDGDS. A compositionally biased stretch (polar residues) spans 917–926; sequence GTNNEGNPSA.

It belongs to the WD repeat COPB2 family. In terms of assembly, oligomeric complex that consists of at least the alpha, beta, beta', gamma, delta, epsilon and zeta subunits.

Its subcellular location is the cytoplasm. The protein resides in the golgi apparatus membrane. It localises to the cytoplasmic vesicle. It is found in the COPI-coated vesicle membrane. Functionally, the coatomer is a cytosolic protein complex that binds to dilysine motifs and reversibly associates with Golgi non-clathrin-coated vesicles, which further mediate biosynthetic protein transport from the ER, via the Golgi up to the trans Golgi network. Coatomer complex is required for budding from Golgi membranes, and is essential for the retrograde Golgi-to-ER transport of dilysine-tagged proteins. In Arabidopsis thaliana (Mouse-ear cress), this protein is Coatomer subunit beta'-2.